Here is a 480-residue protein sequence, read N- to C-terminus: Adenosylhomocysteinase (480 aa).

3 residues coordinate substrate: Thr-63, Asp-142, and Glu-203. An NAD(+)-binding site is contributed by 204 to 206 (TTT). Residues Lys-233 and Asp-237 each contribute to the substrate site. NAD(+) is bound by residues Asn-238, 267-272 (GYGDVG), Glu-290, Asn-325, 346-348 (IGH), and Asn-394.

Belongs to the adenosylhomocysteinase family. Requires NAD(+) as cofactor.

It localises to the cytoplasm. It catalyses the reaction S-adenosyl-L-homocysteine + H2O = L-homocysteine + adenosine. It participates in amino-acid biosynthesis; L-homocysteine biosynthesis; L-homocysteine from S-adenosyl-L-homocysteine: step 1/1. Functionally, may play a key role in the regulation of the intracellular concentration of adenosylhomocysteine. The sequence is that of Adenosylhomocysteinase from Xanthomonas axonopodis pv. citri (strain 306).